Here is a 478-residue protein sequence, read N- to C-terminus: 3-isopropylmalate dehydratase large subunit (478 aa).

C359, C420, and C423 together coordinate [4Fe-4S] cluster.

This sequence belongs to the aconitase/IPM isomerase family. LeuC type 1 subfamily. In terms of assembly, heterodimer of LeuC and LeuD. The cofactor is [4Fe-4S] cluster.

The enzyme catalyses (2R,3S)-3-isopropylmalate = (2S)-2-isopropylmalate. It functions in the pathway amino-acid biosynthesis; L-leucine biosynthesis; L-leucine from 3-methyl-2-oxobutanoate: step 2/4. Functionally, catalyzes the isomerization between 2-isopropylmalate and 3-isopropylmalate, via the formation of 2-isopropylmaleate. The chain is 3-isopropylmalate dehydratase large subunit from Psychrobacter sp. (strain PRwf-1).